The primary structure comprises 455 residues: Probable alpha-galactosidase B (455 aa).

The first 16 residues, 1–16 (MIEFLALITLISRANA), serve as a signal peptide directing secretion. Cystine bridges form between C39/C71 and C121/C151. N42 is a glycosylation site (N-linked (GlcNAc...) asparagine). D149 (nucleophile) is an active-site residue. Residues N177 and N192 are each glycosylated (N-linked (GlcNAc...) asparagine). 222 to 226 (NWGNA) serves as a coordination point for substrate. D244 serves as the catalytic Proton donor. A glycan (N-linked (GlcNAc...) asparagine) is linked at N395.

The protein belongs to the glycosyl hydrolase 27 family.

The protein localises to the secreted. It carries out the reaction Hydrolysis of terminal, non-reducing alpha-D-galactose residues in alpha-D-galactosides, including galactose oligosaccharides, galactomannans and galactolipids.. Its function is as follows. Hydrolyzes a variety of simple alpha-D-galactoside as well as more complex molecules such as oligosaccharides and polysaccharides. The sequence is that of Probable alpha-galactosidase B (aglB) from Emericella nidulans (strain FGSC A4 / ATCC 38163 / CBS 112.46 / NRRL 194 / M139) (Aspergillus nidulans).